A 63-amino-acid chain; its full sequence is Large ribosomal subunit protein bL32 (63 aa).

The segment at 1–27 is disordered; the sequence is MANPKAKMSKSRRDKRRAQFNARTKPV. Residues 7–18 show a composition bias toward basic residues; sequence KMSKSRRDKRRA.

This sequence belongs to the bacterial ribosomal protein bL32 family.

This is Large ribosomal subunit protein bL32 from Chlorobium phaeobacteroides (strain DSM 266 / SMG 266 / 2430).